The sequence spans 189 residues: CDP-archaeol synthase (189 aa).

5 helical membrane passes run 6–26 (VAIA…AVLA), 71–91 (GVVL…TVGV), 96–116 (IAAA…ASFL), 125–145 (GAAF…ALTA), and 162–184 (VAIF…AFGL).

The protein belongs to the CDP-archaeol synthase family. Mg(2+) serves as cofactor.

It is found in the cell membrane. It catalyses the reaction 2,3-bis-O-(geranylgeranyl)-sn-glycerol 1-phosphate + CTP + H(+) = CDP-2,3-bis-O-(geranylgeranyl)-sn-glycerol + diphosphate. The protein operates within membrane lipid metabolism; glycerophospholipid metabolism. Catalyzes the formation of CDP-2,3-bis-(O-geranylgeranyl)-sn-glycerol (CDP-archaeol) from 2,3-bis-(O-geranylgeranyl)-sn-glycerol 1-phosphate (DGGGP) and CTP. This reaction is the third ether-bond-formation step in the biosynthesis of archaeal membrane lipids. This is CDP-archaeol synthase from Natronomonas pharaonis (strain ATCC 35678 / DSM 2160 / CIP 103997 / JCM 8858 / NBRC 14720 / NCIMB 2260 / Gabara) (Halobacterium pharaonis).